The primary structure comprises 140 residues: 3-hydroxyacyl-[acyl-carrier-protein] dehydratase FabZ (140 aa).

H48 is an active-site residue.

The protein belongs to the thioester dehydratase family. FabZ subfamily.

The protein localises to the cytoplasm. It catalyses the reaction a (3R)-hydroxyacyl-[ACP] = a (2E)-enoyl-[ACP] + H2O. Its function is as follows. Involved in unsaturated fatty acids biosynthesis. Catalyzes the dehydration of short chain beta-hydroxyacyl-ACPs and long chain saturated and unsaturated beta-hydroxyacyl-ACPs. The chain is 3-hydroxyacyl-[acyl-carrier-protein] dehydratase FabZ from Caldicellulosiruptor saccharolyticus (strain ATCC 43494 / DSM 8903 / Tp8T 6331).